The sequence spans 476 residues: RNA-binding protein 45 (476 aa).

The span at 1 to 14 (MDDAGGLGGSGGFR) shows a compositional bias: gly residues. The interval 1-20 (MDDAGGLGGSGGFRPGVDSL) is disordered. RRM domains are found at residues 26-106 (SRIF…IAQS) and 121-192 (TRIF…LAEP). Lys-34 is covalently cross-linked (Glycyl lysine isopeptide (Lys-Gly) (interchain with G-Cter in SUMO2)). Residues 192-212 (PKNKVSGSPEQDDYSSGRQEA) are disordered. The segment covering 196–209 (VSGSPEQDDYSSGR) has biased composition (polar residues). Ser-199 and Ser-464 each carry phosphoserine. In terms of domain architecture, RRM 3 spans 392–464 (ERLFVVFNPH…VRLKVMLADS (73 aa)).

The protein resides in the cytoplasm. It localises to the nucleus. Functionally, RNA-binding protein with binding specificity for poly(C). May play an important role in neural development. The sequence is that of RNA-binding protein 45 (Rbm45) from Mus musculus (Mouse).